Reading from the N-terminus, the 169-residue chain is Shikimate kinase (169 aa).

ATP is bound at residue 13–18; sequence GAGKST. Ser17 contacts Mg(2+). Positions 35, 59, and 80 each coordinate substrate. Arg117 contributes to the ATP binding site. Residue Arg136 coordinates substrate. An ATP-binding site is contributed by Arg153.

This sequence belongs to the shikimate kinase family. Monomer. It depends on Mg(2+) as a cofactor.

Its subcellular location is the cytoplasm. It carries out the reaction shikimate + ATP = 3-phosphoshikimate + ADP + H(+). Its pathway is metabolic intermediate biosynthesis; chorismate biosynthesis; chorismate from D-erythrose 4-phosphate and phosphoenolpyruvate: step 5/7. Its function is as follows. Catalyzes the specific phosphorylation of the 3-hydroxyl group of shikimic acid using ATP as a cosubstrate. The chain is Shikimate kinase from Corynebacterium glutamicum (strain ATCC 13032 / DSM 20300 / JCM 1318 / BCRC 11384 / CCUG 27702 / LMG 3730 / NBRC 12168 / NCIMB 10025 / NRRL B-2784 / 534).